The following is a 141-amino-acid chain: Hemoglobin subunit alpha-D (141 aa).

The Globin domain occupies 1-141 (MLTADDKKLL…VAAVLAEKYR (141 aa)). Positions 58 and 87 each coordinate heme b.

The protein belongs to the globin family. Heterotetramer of two alpha-D chains and two beta chains. Red blood cells.

In terms of biological role, involved in oxygen transport from the lung to the various peripheral tissues. The polypeptide is Hemoglobin subunit alpha-D (HBAD) (Chloephaga melanoptera (Andean goose)).